Consider the following 218-residue polypeptide: Pyridoxine/pyridoxamine 5'-phosphate oxidase (218 aa).

Substrate is bound by residues 12-15 and R70; that span reads RLSY. FMN-binding positions include 65–70, 80–81, K87, and Q109; these read RTVLLR and YT. The substrate site is built by Y127, R131, and S135. FMN-binding positions include 145-146 and W191; that span reads QS. Residue 197-199 participates in substrate binding; that stretch reads RLH. R201 contributes to the FMN binding site.

Belongs to the pyridoxamine 5'-phosphate oxidase family. As to quaternary structure, homodimer. Requires FMN as cofactor.

The enzyme catalyses pyridoxamine 5'-phosphate + O2 + H2O = pyridoxal 5'-phosphate + H2O2 + NH4(+). It catalyses the reaction pyridoxine 5'-phosphate + O2 = pyridoxal 5'-phosphate + H2O2. It participates in cofactor metabolism; pyridoxal 5'-phosphate salvage; pyridoxal 5'-phosphate from pyridoxamine 5'-phosphate: step 1/1. It functions in the pathway cofactor metabolism; pyridoxal 5'-phosphate salvage; pyridoxal 5'-phosphate from pyridoxine 5'-phosphate: step 1/1. Its function is as follows. Catalyzes the oxidation of either pyridoxine 5'-phosphate (PNP) or pyridoxamine 5'-phosphate (PMP) into pyridoxal 5'-phosphate (PLP). The chain is Pyridoxine/pyridoxamine 5'-phosphate oxidase from Acinetobacter baumannii (strain AB0057).